The primary structure comprises 160 residues: Protein-export protein SecB (160 aa).

The protein belongs to the SecB family. In terms of assembly, homotetramer, a dimer of dimers. One homotetramer interacts with 1 SecA dimer.

The protein resides in the cytoplasm. In terms of biological role, one of the proteins required for the normal export of preproteins out of the cell cytoplasm. It is a molecular chaperone that binds to a subset of precursor proteins, maintaining them in a translocation-competent state. It also specifically binds to its receptor SecA. This is Protein-export protein SecB from Burkholderia lata (strain ATCC 17760 / DSM 23089 / LMG 22485 / NCIMB 9086 / R18194 / 383).